A 439-amino-acid polypeptide reads, in one-letter code: Trigger factor (439 aa).

One can recognise a PPIase FKBP-type domain in the interval 165-250; it reads GDFAKFDFEG…LHEIQELKLP (86 aa).

It belongs to the FKBP-type PPIase family. Tig subfamily.

Its subcellular location is the cytoplasm. It catalyses the reaction [protein]-peptidylproline (omega=180) = [protein]-peptidylproline (omega=0). Functionally, involved in protein export. Acts as a chaperone by maintaining the newly synthesized protein in an open conformation. Functions as a peptidyl-prolyl cis-trans isomerase. The chain is Trigger factor from Campylobacter lari (strain RM2100 / D67 / ATCC BAA-1060).